Reading from the N-terminus, the 145-residue chain is Probable low molecular weight protein-tyrosine-phosphatase EpsP (145 aa).

Cys9 functions as the Nucleophile in the catalytic mechanism. The active site involves Arg15. Residue Asp114 is the Proton donor of the active site.

This sequence belongs to the low molecular weight phosphotyrosine protein phosphatase family.

It carries out the reaction O-phospho-L-tyrosyl-[protein] + H2O = L-tyrosyl-[protein] + phosphate. It functions in the pathway glycan metabolism; exopolysaccharide biosynthesis. May be involved in assembly or function of the EPS I polymerization/export complex and/or the EpsB ATPase. Alternatively it may function in the removal of the terminal phosphate from C55-isoprenyl pyrophosphate in order to recycle the C55-isoprenyl phosphate lipid carrier used in the synthesis of polysaccharide repeat units. The protein is Probable low molecular weight protein-tyrosine-phosphatase EpsP (epsP) of Ralstonia solanacearum (Pseudomonas solanacearum).